The primary structure comprises 501 residues: Cytochrome P450 monooxygeanse terP (501 aa).

A helical transmembrane segment spans residues 2 to 22 (PSLLLSLLLLQVPIICAWLLV). Cys441 provides a ligand contact to heme.

The protein belongs to the cytochrome P450 family. The cofactor is heme.

It localises to the membrane. The protein operates within secondary metabolite biosynthesis. In terms of biological role, cytochrome P450 monooxygeanse; part of the gene cluster that mediates the biosynthesis of terpendoles, indole-diterpene (IDT) mycotoxins including terpendole I, terpendole K, terpendole C, as well as the kinesin Eg5 inhibitor terpendole E. TerP has dual activity and is able to convert terpendole E to 13-desoxyterpendole I and paspaline to 13-desoxypaxilline. Terpendoles biosynthesis begins with the synthesis of geranylgeranyl diphosphate (GGPP) by a yet unidentified GGPP synthase. Condensation of indole-3-glycerol phosphate with GGPP by the prenyltransferase terC then forms 3-geranylgeranylindole (3-GGI), followed by epoxidation and cyclization of this intermediate (by the FAD-dependent monooxygeanse terM and the terpene cyclase terB) to form paspaline. The cytochrome monooxygenase terQ then hydroxylates paspalline at C-11 to yield terpendole E. The cytochrome monooxygenase terP converts terpendole E to 13-desoxyterpendole I, and terQ converts 13-desoxyterpendole I into terpendole I. TerF and terK are required for conversion of terpendole I to terpendole C which is further converted to terpendole K. The sequence is that of Cytochrome P450 monooxygeanse terP from Tolypocladium album (Soil fungus).